The primary structure comprises 567 residues: Thiol:disulfide interchange protein DsbD (567 aa).

The first 19 residues, M1–A19, serve as a signal peptide directing secretion. 2 cysteine pairs are disulfide-bonded: C122–C128 and C185–C307. Transmembrane regions (helical) follow at residues L166–V186, L211–V231, Y246–F266, I299–I319, W326–V346, W360–L380, A387–T407, and I418–A438. The Thioredoxin domain maps to Q435 to P567. A disulfide bridge links C482 with C485.

It belongs to the thioredoxin family. DsbD subfamily.

Its subcellular location is the cell inner membrane. It carries out the reaction [protein]-dithiol + NAD(+) = [protein]-disulfide + NADH + H(+). The catalysed reaction is [protein]-dithiol + NADP(+) = [protein]-disulfide + NADPH + H(+). In terms of biological role, required to facilitate the formation of correct disulfide bonds in some periplasmic proteins and for the assembly of the periplasmic c-type cytochromes. Acts by transferring electrons from cytoplasmic thioredoxin to the periplasm. This transfer involves a cascade of disulfide bond formation and reduction steps. This chain is Thiol:disulfide interchange protein DsbD, found in Salmonella paratyphi A (strain ATCC 9150 / SARB42).